A 284-amino-acid polypeptide reads, in one-letter code: MPASLIDGREISALRRAELKQRVLYHVEQGQRAPGLAVVLIGNDPASVIYVSNKRKACEEVGITSHSYDLPAETTQEKLIELINELNQSDKIDGILIQLPLPKHINERTIIEYIKPEKDVDGFHPYNLGRLAQRNPFLRPCTPLGIMNLLHHYELNVKRKHAVVIGASNIVGRPMSLELLLAGATVTICHKFTQQLQKFVEIADFLIVATGKMDVIATDWLREHQVVIDVGMHRLPDGSIRGDIDFKKAVEKVAWITPVPGGVGPMTIVTLLENTMMSAARLRE.

Position 166-168 (166-168) interacts with NADP(+); sequence GAS.

Belongs to the tetrahydrofolate dehydrogenase/cyclohydrolase family. As to quaternary structure, homodimer.

It carries out the reaction (6R)-5,10-methylene-5,6,7,8-tetrahydrofolate + NADP(+) = (6R)-5,10-methenyltetrahydrofolate + NADPH. It catalyses the reaction (6R)-5,10-methenyltetrahydrofolate + H2O = (6R)-10-formyltetrahydrofolate + H(+). The protein operates within one-carbon metabolism; tetrahydrofolate interconversion. Functionally, catalyzes the oxidation of 5,10-methylenetetrahydrofolate to 5,10-methenyltetrahydrofolate and then the hydrolysis of 5,10-methenyltetrahydrofolate to 10-formyltetrahydrofolate. The polypeptide is Bifunctional protein FolD (Legionella pneumophila subsp. pneumophila (strain Philadelphia 1 / ATCC 33152 / DSM 7513)).